The sequence spans 239 residues: ATP synthase subunit a, chloroplastic (239 aa).

5 helical membrane-spanning segments follow: residues 30–50 (VLLV…LGTF), 87–107 (VPFI…GALV), 126–146 (INTT…AGLS), 191–211 (LVVA…VMVL), and 212–232 (GLFA…SYIG).

It belongs to the ATPase A chain family. F-type ATPases have 2 components, CF(1) - the catalytic core - and CF(0) - the membrane proton channel. CF(1) has five subunits: alpha(3), beta(3), gamma(1), delta(1), epsilon(1). CF(0) has four main subunits: a, b, b' and c.

The protein resides in the plastid. The protein localises to the chloroplast thylakoid membrane. In terms of biological role, key component of the proton channel; it plays a direct role in the translocation of protons across the membrane. The polypeptide is ATP synthase subunit a, chloroplastic (Cyanidium caldarium (Red alga)).